Consider the following 872-residue polypeptide: Metabotropic glutamate receptor 2 (872 aa).

The signal sequence occupies residues 1 to 18 (MESLLRFLALLLLRGAVA). At 19-568 (EGPAKKVLTL…EYIRWGDAWA (550 aa)) the chain is on the extracellular side. C50 and C92 are oxidised to a cystine. L-glutamate is bound by residues R57, R61, S145, A166, and T168. N-linked (GlcNAc...) asparagine glycosylation is found at N203 and N286. 7 disulfides stabilise this stretch: C234-C518, C355-C362, C400-C407, C500-C519, C504-C522, C525-C537, and C540-C553. D295 is an L-glutamate binding site. N338 is a glycosylation site (N-linked (GlcNAc...) asparagine). K377 is a binding site for L-glutamate. N402 carries an N-linked (GlcNAc...) asparagine glycan. N-linked (GlcNAc...) asparagine glycosylation occurs at N547. Residues 569 to 589 (VGPVTIACLGALATLFVLGVF) traverse the membrane as a helical segment. The Cytoplasmic portion of the chain corresponds to 590 to 604 (VRHNATPVVKASGRE). A helical transmembrane segment spans residues 605–625 (LCYILLGGVFLCYCMTFIFIA). At 626-633 (KPSTAVCT) the chain is on the extracellular side. Residues C632 and C721 are joined by a disulfide bond. A helical membrane pass occupies residues 634–651 (LRRLGLGTAFSVCYSALL). Over 652–679 (TKTNRIARIFGGAREGAQRPRFISPASQ) the chain is Cytoplasmic. Residues 677-685 (ASQVAICLA) form an important for interaction with HTR2A region. Residues 680-700 (VAICLALISGQLLIVAAWLVV) form a helical membrane-spanning segment. The Extracellular portion of the chain corresponds to 701 to 726 (EAPGIGKETAPERREVVTLRCNHRDA). A helical membrane pass occupies residues 727 to 747 (SMLGSLAYNVLLIALCTLYAF). Over 748–760 (KTRKCPENFNEAK) the chain is Cytoplasmic. Residues 761–781 (FIGFTMYTTCIIWLAFLPIFY) form a helical membrane-spanning segment. Topologically, residues 782 to 798 (VTSSDYRVQTTTMCVSV) are extracellular. Residues 799–819 (SLSGSVVLGCLFAPKLHIILF) traverse the membrane as a helical segment. Topologically, residues 820–872 (QPQKNVVSHRAPTSRFGSAAPRASANLGQGSGSQLVPTVCNGREVVDSTTSSL) are cytoplasmic.

It belongs to the G-protein coupled receptor 3 family. As to quaternary structure, forms heterodimers with GRM3 or GRM4. Interacts with GNAI1. Interacts with TAMALIN. Interacts with HTR2A. As to expression, detected in neurons in brain cortex (at protein level).

It is found in the cell membrane. It localises to the synapse. Its subcellular location is the cell projection. The protein resides in the dendrite. Its function is as follows. Dimeric G protein-coupled receptor which is activated by the excitatory neurotransmitter L-glutamate. Plays critical roles in modulating synaptic transmission and neuronal excitability. Upon activation by glutamate, inhibits presynaptic calcium channels, reducing further glutamate release and dampening excitatory signaling. Mechanistically, ligand binding causes a conformation change that triggers signaling via guanine nucleotide-binding proteins (G proteins) and modulates the activity of down-stream effectors, such as adenylate cyclase. May mediate suppression of neurotransmission or may be involved in synaptogenesis or synaptic stabilization. This chain is Metabotropic glutamate receptor 2 (Grm2), found in Mus musculus (Mouse).